The following is a 310-amino-acid chain: Ribosomal RNA small subunit methyltransferase H (310 aa).

Residues 33–35 (AGH), Asp-53, Phe-79, Asp-100, and Gln-107 contribute to the S-adenosyl-L-methionine site.

It belongs to the methyltransferase superfamily. RsmH family.

The protein localises to the cytoplasm. It catalyses the reaction cytidine(1402) in 16S rRNA + S-adenosyl-L-methionine = N(4)-methylcytidine(1402) in 16S rRNA + S-adenosyl-L-homocysteine + H(+). Functionally, specifically methylates the N4 position of cytidine in position 1402 (C1402) of 16S rRNA. This Desulfitobacterium hafniense (strain DSM 10664 / DCB-2) protein is Ribosomal RNA small subunit methyltransferase H.